Here is a 290-residue protein sequence, read N- to C-terminus: Small ribosomal subunit biogenesis GTPase RsgA (290 aa).

Positions 61 to 218 constitute a CP-type G domain; sequence KSELVRPTVA…IVDTPGFSTL (158 aa). Residues 110–113 and 161–169 contribute to the GTP site; these read NKID and GPSGAGKST. 4 residues coordinate Zn(2+): C243, C248, H250, and C256.

The protein belongs to the TRAFAC class YlqF/YawG GTPase family. RsgA subfamily. In terms of assembly, monomer. Associates with 30S ribosomal subunit, binds 16S rRNA. Zn(2+) serves as cofactor.

The protein localises to the cytoplasm. In terms of biological role, one of several proteins that assist in the late maturation steps of the functional core of the 30S ribosomal subunit. Helps release RbfA from mature subunits. May play a role in the assembly of ribosomal proteins into the subunit. Circularly permuted GTPase that catalyzes slow GTP hydrolysis, GTPase activity is stimulated by the 30S ribosomal subunit. The polypeptide is Small ribosomal subunit biogenesis GTPase RsgA (Clostridium beijerinckii (strain ATCC 51743 / NCIMB 8052) (Clostridium acetobutylicum)).